Here is a 582-residue protein sequence, read N- to C-terminus: MDSQLKKKTTFKRLLGYIKPYKAAFIAAILCMIGYSAIDTLFLSQIETLIDDGLTEQDSNILLYGALFVPFIFILRGSLNVASSYFLHWVGFKVVTKMRQQLFDHMMKLPVGFHDQHSTGDLISKITYDTQQVAEASSRAVLVLVKEGAFVAGLLGLMFYQSWQLSLVFLVIGPLVAKVVGVVSRRFRKVSSRIQTAMGNVTTTAEQMINGHKVVIMHQGQKGESTRFSEINNITRNQNMKLVNTRAISTSVIQFIASLSLSMVLVIASFPEMLGELSAGAFTTLLTAMIMLLRPLKQLTNVNSDFQRGIAAATSVFAILDEPIEVDKGSRVVDRAAGDIVFDDVTFSYQKDDEPALEHINFKVDQGKTVALVGRSGSGKSTISNLLTRFYDVEQGSILLDGHNINDYKLKCLRRQFALVSQHVTLFNDTIANNIAYGASKDVSRENIIKAAEQAYVTEFTDSMPKGLDTMVGENGVMLSGGQRQRIAIARALLQDAPILILDEATSALDTESERHIQDALGTLRKNRTAIVIAHRLSTIENADEILVMDNGEIIERGTHQQLLDQEGAYFQLHNLQFSGSA.

The next 6 helical transmembrane spans lie at 23–43 (AAFIAAILCMIGYSAIDTLFL), 61–81 (ILLYGALFVPFIFILRGSLNV), 140–160 (AVLVLVKEGAFVAGLLGLMFY), 163–183 (WQLSLVFLVIGPLVAKVVGVV), 247–267 (AISTSVIQFIASLSLSMVLVI), and 273–293 (MLGELSAGAFTTLLTAMIMLL). The region spanning 26–308 (IAAILCMIGY…LTNVNSDFQR (283 aa)) is the ABC transmembrane type-1 domain. In terms of domain architecture, ABC transporter spans 340–576 (IVFDDVTFSY…EGAYFQLHNL (237 aa)). An ATP-binding site is contributed by 374-381 (GRSGSGKS).

It belongs to the ABC transporter superfamily. Lipid exporter (TC 3.A.1.106) family. As to quaternary structure, homodimer.

It is found in the cell inner membrane. The catalysed reaction is ATP + H2O + lipid A-core oligosaccharideSide 1 = ADP + phosphate + lipid A-core oligosaccharideSide 2.. Functionally, involved in lipopolysaccharide (LPS) biosynthesis. Translocates lipid A-core from the inner to the outer leaflet of the inner membrane. Transmembrane domains (TMD) form a pore in the inner membrane and the ATP-binding domain (NBD) is responsible for energy generation. This chain is ATP-dependent lipid A-core flippase, found in Idiomarina loihiensis (strain ATCC BAA-735 / DSM 15497 / L2-TR).